The chain runs to 37 residues: Large ribosomal subunit protein bL36 (37 aa).

The protein belongs to the bacterial ribosomal protein bL36 family.

This Thioalkalivibrio sulfidiphilus (strain HL-EbGR7) protein is Large ribosomal subunit protein bL36.